Here is a 502-residue protein sequence, read N- to C-terminus: Cytochrome P450 monooxygenase verC (502 aa).

A helical membrane pass occupies residues 9-29 (IAALPMVSLLGAALIVVSVLG). 4 N-linked (GlcNAc...) asparagine glycosylation sites follow: Asn124, Asn190, Asn271, and Asn342. A heme-binding site is contributed by Cys444.

This sequence belongs to the cytochrome P450 family. It depends on heme as a cofactor.

Its subcellular location is the membrane. Its pathway is mycotoxin biosynthesis. Its function is as follows. Cytochrome P450 monooxygenase; part of the gene cluster that mediates the biosynthesis of 11'-deoxyverticillin A, one of the dimeric epipolythiodioxopiperazines (ETPs) from the verticillin family that act as mycotoxins. 11'-deoxyverticillin A is required for normal conidiation. The nonribosomal peptide synthetase verP is speculated to be responsible for condensation of amino acids to form the carbon skeleton of verticillin, whereas the cluster-specific tailoring enzymes are involved in further modifications leading to the production of 11'-deoxyverticillin A. The sequence is that of Cytochrome P450 monooxygenase verC from Clonostachys rogersoniana.